The following is a 429-amino-acid chain: GTPase Obg (429 aa).

The region spanning 1–158 (MFVDQVKIYV…RNVQLELKVL (158 aa)) is the Obg domain. A disordered region spans residues 124–145 (RGNKRFATPANPAPELSENGEP). Residues 159–329 (ADVGLVGFPS…LLLAIADKLE (171 aa)) form the OBG-type G domain. GTP contacts are provided by residues 165–172 (GFPSVGKS), 190–194 (FTTIV), 212–215 (DLPG), 282–285 (NKMD), and 310–312 (SAV). Residues S172 and T192 each contribute to the Mg(2+) site. The 79-residue stretch at 351–429 (KYVAEEPDFE…LLDYEFEFMD (79 aa)) folds into the OCT domain.

This sequence belongs to the TRAFAC class OBG-HflX-like GTPase superfamily. OBG GTPase family. In terms of assembly, monomer. The cofactor is Mg(2+).

The protein localises to the cytoplasm. In terms of biological role, an essential GTPase which binds GTP, GDP and possibly (p)ppGpp with moderate affinity, with high nucleotide exchange rates and a fairly low GTP hydrolysis rate. Plays a role in control of the cell cycle, stress response, ribosome biogenesis and in those bacteria that undergo differentiation, in morphogenesis control. The chain is GTPase Obg from Listeria innocua serovar 6a (strain ATCC BAA-680 / CLIP 11262).